Consider the following 269-residue polypeptide: uncharacterized protein (269 aa).

This is an uncharacterized protein from Acanthamoeba polyphaga mimivirus (APMV).